Reading from the N-terminus, the 287-residue chain is Bifunctional protein FolD (287 aa).

Residues G166–S168 and I232 each bind NADP(+).

The protein belongs to the tetrahydrofolate dehydrogenase/cyclohydrolase family. In terms of assembly, homodimer.

It catalyses the reaction (6R)-5,10-methylene-5,6,7,8-tetrahydrofolate + NADP(+) = (6R)-5,10-methenyltetrahydrofolate + NADPH. The catalysed reaction is (6R)-5,10-methenyltetrahydrofolate + H2O = (6R)-10-formyltetrahydrofolate + H(+). It functions in the pathway one-carbon metabolism; tetrahydrofolate interconversion. Functionally, catalyzes the oxidation of 5,10-methylenetetrahydrofolate to 5,10-methenyltetrahydrofolate and then the hydrolysis of 5,10-methenyltetrahydrofolate to 10-formyltetrahydrofolate. The chain is Bifunctional protein FolD from Aeromonas hydrophila subsp. hydrophila (strain ATCC 7966 / DSM 30187 / BCRC 13018 / CCUG 14551 / JCM 1027 / KCTC 2358 / NCIMB 9240 / NCTC 8049).